The chain runs to 417 residues: Putative UDP-arabinose 4-epimerase 2 (417 aa).

Topologically, residues 1-31 are cytoplasmic; that stretch reads MLNLGRARTGRQNRSMSFEGLDFADPKKNNN. Residues 32–54 form a helical; Signal-anchor for type II membrane protein membrane-spanning segment; it reads YMGKIVLVMTLTAMCILLLNQSP. The Lumenal segment spans residues 55–417; sequence TFNTPSVFSR…YGSSSLVSAY (363 aa). 71–102 is a binding site for NAD(+); that stretch reads HVLVTGGAGYIGSHAALRLLKDSYRVTIVDNL. Catalysis depends on tyrosine 219, which acts as the Proton acceptor.

Belongs to the NAD(P)-dependent epimerase/dehydratase family. Requires NAD(+) as cofactor.

Its subcellular location is the golgi apparatus. It localises to the golgi stack membrane. The catalysed reaction is UDP-beta-L-arabinopyranose = UDP-alpha-D-xylose. The protein operates within nucleotide-sugar biosynthesis; UDP-L-arabinose biosynthesis; UDP-L-arabinose from UDP-alpha-D-xylose: step 1/1. It functions in the pathway cell wall biogenesis; cell wall polysaccharide biosynthesis. The protein is Putative UDP-arabinose 4-epimerase 2 of Arabidopsis thaliana (Mouse-ear cress).